Here is a 239-residue protein sequence, read N- to C-terminus: Phosphoribosylaminoimidazole-succinocarboxamide synthase (239 aa).

This sequence belongs to the SAICAR synthetase family.

It catalyses the reaction 5-amino-1-(5-phospho-D-ribosyl)imidazole-4-carboxylate + L-aspartate + ATP = (2S)-2-[5-amino-1-(5-phospho-beta-D-ribosyl)imidazole-4-carboxamido]succinate + ADP + phosphate + 2 H(+). Its pathway is purine metabolism; IMP biosynthesis via de novo pathway; 5-amino-1-(5-phospho-D-ribosyl)imidazole-4-carboxamide from 5-amino-1-(5-phospho-D-ribosyl)imidazole-4-carboxylate: step 1/2. This is Phosphoribosylaminoimidazole-succinocarboxamide synthase from Chlorobium luteolum (strain DSM 273 / BCRC 81028 / 2530) (Pelodictyon luteolum).